The chain runs to 144 residues: Small ribosomal subunit protein uS12 (144 aa).

A disordered region spans residues 1–55 (MPTINQLVRKGREDKVVKSKSPALQKGYNSFKKSQTNQSSPQKRGVCTRVGTMTP). Positions 27 to 42 (GYNSFKKSQTNQSSPQ) are enriched in polar residues. 3-methylthioaspartic acid is present on Asp-102. Positions 119 to 144 (GVNNRKQGRSKYGTKRPKPGQAAAKK) are disordered. Positions 124-144 (KQGRSKYGTKRPKPGQAAAKK) are enriched in basic residues.

Belongs to the universal ribosomal protein uS12 family. As to quaternary structure, part of the 30S ribosomal subunit. Contacts proteins S8 and S17. May interact with IF1 in the 30S initiation complex.

With S4 and S5 plays an important role in translational accuracy. Functionally, interacts with and stabilizes bases of the 16S rRNA that are involved in tRNA selection in the A site and with the mRNA backbone. Located at the interface of the 30S and 50S subunits, it traverses the body of the 30S subunit contacting proteins on the other side and probably holding the rRNA structure together. The combined cluster of proteins S8, S12 and S17 appears to hold together the shoulder and platform of the 30S subunit. The protein is Small ribosomal subunit protein uS12 of Brevibacillus brevis (strain 47 / JCM 6285 / NBRC 100599).